Here is a 1429-residue protein sequence, read N- to C-terminus: Nitric oxide synthase 1 (1429 aa).

An interaction with NOSIP region spans residues 1–200; it reads MEENTFGVQQ…LQDIGEHDEL (200 aa). Positions 17-99 constitute a PDZ domain; that stretch reads SVRLFKRKVG…ETHVVLILRG (83 aa). Disordered regions lie at residues 152–174, 214–255, and 271–298; these read VTGL…SVSQ, GSKA…DNDR, and NNPY…SRCP. Over residues 160-174 the composition is skewed to low complexity; sequence QHAQGHGQGAGSVSQ. The segment at 163 to 240 is interaction with DYNLL1/PIN; that stretch reads QGHGQGAGSV…TGIQVDRDLD (78 aa). Positions 226-243 are enriched in basic and acidic residues; it reads AEMKDTGIQVDRDLDGKS. The residue at position 280 (serine 280) is a Phosphoserine. Residues 280-294 show a composition bias toward polar residues; that stretch reads SPTSGKQSPTKNGSP. (6R)-L-erythro-5,6,7,8-tetrahydrobiopterin is bound at residue serine 334. Cysteine 415 serves as a coordination point for heme b. L-arginine-binding residues include glutamine 478, tryptophan 587, tyrosine 588, and glutamate 592. Residues valine 677, tryptophan 678, and phenylalanine 691 each contribute to the (6R)-L-erythro-5,6,7,8-tetrahydrobiopterin site. Position 706 (tyrosine 706) interacts with heme b. Residues 725 to 745 form a calmodulin-binding region; sequence KRRAIGFKKLAEAVKFSAKLM. The 181-residue stretch at 755 to 935 folds into the Flavodoxin-like domain; it reads ATILYATETG…AFRTWAKKVF (181 aa). FMN contacts are provided by threonine 761, glutamate 762, threonine 763, lysine 765, serine 766, serine 807, threonine 808, and glycine 812. Phosphoserine occurs at positions 847, 857, and 858. FMN contacts are provided by serine 886, histidine 891, cysteine 893, glutamate 919, and glutamine 923. The FAD-binding FR-type domain maps to 990–1237; that stretch reads KRVSAARLLS…VRGAPSFHLP (248 aa). Arginine 1010 serves as a coordination point for NADP(+). The FAD site is built by histidine 1032, arginine 1173, tyrosine 1174, tyrosine 1175, serine 1176, threonine 1191, and alanine 1193. An NADP(+)-binding site is contributed by serine 1196. 4 residues coordinate FAD: tyrosine 1197, valine 1210, cysteine 1211, and serine 1212. Positions 1251, 1284, 1313, 1314, 1320, 1322, 1324, 1357, 1398, and 1400 each coordinate NADP(+).

It belongs to the NOS family. As to quaternary structure, homodimer. Interacts with DLG4 (via N-terminal tandem pair of PDZ domains); the interaction possibly being prevented by the association between NOS1 and CAPON. Forms a ternary complex with CAPON and RASD1. Forms a ternary complex with CAPON and SYN1. Interacts with ZDHHC23. Interacts with NOSIP; which may impair its synaptic location. Interacts with HTR4. Interacts with SLC6A4. Interacts with VAC14. Forms a complex with ASL, ASS1 and SLC7A1; the complex regulates cell-autonomous L-arginine synthesis and citrulline recycling while channeling extracellular L-arginine to nitric oxide synthesis pathway. Interacts with DMD; localizes NOS1 to sarcolemma in muscle cells. Interacts with DYNLL1; inhibits the nitric oxide synthase activity. Heme b is required as a cofactor. Requires FAD as cofactor. It depends on FMN as a cofactor. The cofactor is (6R)-L-erythro-5,6,7,8-tetrahydrobiopterin. Post-translationally, ubiquitinated; mediated by STUB1/CHIP in the presence of Hsp70 and Hsp40 (in vitro). As to expression, isoform N-NOS-1 is expressed in brain and colorectum. Found in the Auerbach's plexus of the enteric nervous system. Isoform PNNOS is expressed in the penis, urethra, prostate, and skeletal muscle, and coexists with the cerebellar nnos in the pelvic plexus, bladder and liver, and is detectable in the cerebellum.

The protein localises to the cell membrane. Its subcellular location is the sarcolemma. It is found in the cell projection. It localises to the dendritic spine. The catalysed reaction is 2 L-arginine + 3 NADPH + 4 O2 + H(+) = 2 L-citrulline + 2 nitric oxide + 3 NADP(+) + 4 H2O. Stimulated by calcium/calmodulin. Inhibited by DYNLL1 that prevents the dimerization of the protein. Inhibited by NOSIP. Its function is as follows. Produces nitric oxide (NO) which is a messenger molecule with diverse functions throughout the body. In the brain and peripheral nervous system, NO displays many properties of a neurotransmitter. Inhibitory transmitter for non-adrenergic and non-cholinergic nerves in the colorectum. Probably has nitrosylase activity and mediates cysteine S-nitrosylation of cytoplasmic target proteins such SRR. Inhibitory transmitter for non-adrenergic and non-cholinergic nerves in the colorectum. This Rattus norvegicus (Rat) protein is Nitric oxide synthase 1.